A 206-amino-acid chain; its full sequence is Emopamil-binding protein-like (206 aa).

Helical transmembrane passes span 10–30 (EAGG…ALGL), 42–62 (GALI…GPFV), 101–121 (VEIL…YAIV), and 165–185 (CWLY…LLLW). Positions 39–184 (ADRGALIWLC…VWVLIPGLLL (146 aa)) constitute an EXPERA domain.

The protein belongs to the EBP family. As to quaternary structure, homodimer. As to expression, widely expressed with highest levels in liver, lung and kidney.

Its subcellular location is the endoplasmic reticulum membrane. In terms of biological role, does not possess sterol isomerase activity and does not bind sigma ligands. The polypeptide is Emopamil-binding protein-like (EBPL) (Homo sapiens (Human)).